The chain runs to 137 residues: Large-conductance mechanosensitive channel (137 aa).

Transmembrane regions (helical) follow at residues 10–30 and 76–96; these read FAMR…AAFG and GAFI…FMAI.

This sequence belongs to the MscL family. As to quaternary structure, homopentamer.

It localises to the cell inner membrane. Its function is as follows. Channel that opens in response to stretch forces in the membrane lipid bilayer. May participate in the regulation of osmotic pressure changes within the cell. The chain is Large-conductance mechanosensitive channel from Pectobacterium carotovorum subsp. carotovorum (strain PC1).